Consider the following 203-residue polypeptide: Large ribosomal subunit protein bL25 (203 aa).

The protein belongs to the bacterial ribosomal protein bL25 family. CTC subfamily. As to quaternary structure, part of the 50S ribosomal subunit; part of the 5S rRNA/L5/L18/L25 subcomplex. Contacts the 5S rRNA. Binds to the 5S rRNA independently of L5 and L18.

Functionally, this is one of the proteins that binds to the 5S RNA in the ribosome where it forms part of the central protuberance. The sequence is that of Large ribosomal subunit protein bL25 from Rickettsia rickettsii (strain Iowa).